The chain runs to 485 residues: Noelin (485 aa).

A signal peptide spans 1–16; the sequence is MSVPLLKIGVVLSTMA. Asn-33, Asn-103, Asn-187, Asn-288, Asn-307, Asn-394, Asn-431, and Asn-473 each carry an N-linked (GlcNAc...) asparagine glycan. Positions 87-227 form a coiled coil; it reads RDARTKQLRQ…LRACMQKLAC (141 aa). In terms of domain architecture, Olfactomedin-like spans 226–478; sequence ACGKLTGISD…QTLYNVTLFH (253 aa). A disulfide bridge connects residues Cys-227 and Cys-409. The Endoplasmic reticulum retention signal signature appears at 482–485; sequence SDEL.

As to quaternary structure, homotetramer; disulfide-linked. Dimer of dimers, giving rise to a V-shaped homotretramer. Isoform 1 and isoform 3 interact with RTN4R. Identified in a complex with RTN4R and LINGO1. Peripherally associated with AMPAR complex. AMPAR complex consists of an inner core made of 4 pore-forming GluA/GRIA proteins (GRIA1, GRIA2, GRIA3 and GRIA4) and 4 major auxiliary subunits arranged in a twofold symmetry. One of the two pairs of distinct binding sites is occupied either by CNIH2, CNIH3 or CACNG2, CACNG3. The other harbors CACNG2, CACNG3, CACNG4, CACNG8 or GSG1L. This inner core of AMPAR complex is complemented by outer core constituents binding directly to the GluA/GRIA proteins at sites distinct from the interaction sites of the inner core constituents. Outer core constituents include at least PRRT1, PRRT2, CKAMP44/SHISA9, FRRS1L and NRN1. The proteins of the inner and outer core serve as a platform for other, more peripherally associated AMPAR constituents, including OLFM1. Alone or in combination, these auxiliary subunits control the gating and pharmacology of the AMPAR complex and profoundly impact their biogenesis and protein processing. Interacts with OLFM2. Interacts with DTNB. Expressed in the brain cortex, olfactory bulb and vomeronasal neuroepithelium (at protein level). Detected in brain cortex, hippocampus, dorsal root ganglion and olfactory bulb.

Its subcellular location is the secreted. It is found in the synapse. The protein localises to the endoplasmic reticulum. It localises to the cell projection. The protein resides in the axon. Its subcellular location is the perikaryon. Contributes to the regulation of axonal growth in the embryonic and adult central nervous system by inhibiting interactions between RTN4R and LINGO1. Inhibits RTN4R-mediated axon growth cone collapse. May play an important role in regulating the production of neural crest cells by the neural tube. May be required for normal responses to olfactory stimuli. The protein is Noelin (Olfm1) of Mus musculus (Mouse).